Consider the following 238-residue polypeptide: MIMNKTTLLHEGKAKKVFLTDDADLVIQEFKDDATAFNNKKKGSIADKGVVNNAISCRLFTMLEEHGVNTHLVEKLSDRDMLCRRLDIIKVEVVVRNIAAGSLVRRYGFTEGTVLARPIVEFYLKDDDLDDPLMIAEHAVALGVATMDELEVLKSRAGAINDVLKKFFADRRLKLVDFKLEFGRHKGEILLGDEISPDTCRFWDLDTDEKMDKDRFRFDLGGVEDAYTEVQRRVLELD.

It belongs to the SAICAR synthetase family.

It carries out the reaction 5-amino-1-(5-phospho-D-ribosyl)imidazole-4-carboxylate + L-aspartate + ATP = (2S)-2-[5-amino-1-(5-phospho-beta-D-ribosyl)imidazole-4-carboxamido]succinate + ADP + phosphate + 2 H(+). The protein operates within purine metabolism; IMP biosynthesis via de novo pathway; 5-amino-1-(5-phospho-D-ribosyl)imidazole-4-carboxamide from 5-amino-1-(5-phospho-D-ribosyl)imidazole-4-carboxylate: step 1/2. This is Phosphoribosylaminoimidazole-succinocarboxamide synthase from Chlorobium phaeovibrioides (strain DSM 265 / 1930) (Prosthecochloris vibrioformis (strain DSM 265)).